The chain runs to 520 residues: Nonsense-mediated mRNA decay factor SMG9 (520 aa).

Disordered stretches follow at residues 1 to 94 (MSES…PAPL) and 107 to 143 (GKGPVAATGASTPEGTAPPPPTAPAPPKGEKEGQRPT). The residue at position 2 (serine 2) is an N-acetylserine. A phosphoserine mark is found at serine 2, serine 4, serine 7, serine 32, and serine 53. The segment covering 36–53 (GRERDYIAPWERERRDGS) has biased composition (basic and acidic residues). A compositionally biased stretch (pro residues) spans 78 to 94 (QPPPSTAPAAPPAPAPL). The segment covering 112-121 (AATGASTPEG) has biased composition (low complexity). Residues 122–133 (TAPPPPTAPAPP) show a composition bias toward pro residues. Position 451 is a phosphoserine (serine 451).

The protein belongs to the SMG9 family. In terms of assembly, self-associates to form homodimers and forms heterodimers with SMG8; these assembly forms may represent SMG1C intermediate forms. Component of the SMG1C complex composed of SMG1, SMG8 and SMG9. Interacts with DHX34; the interaction is RNA-independent. Post-translationally, phosphorylated by SMG1.

Its function is as follows. Involved in nonsense-mediated decay (NMD) of mRNAs containing premature stop codons. Is recruited by release factors to stalled ribosomes together with SMG1 and SMG8 (forming the SMG1C protein kinase complex) and, in the SMG1C complex, is required for the efficient association between SMG1 and SMG8. Plays a role in brain, heart, and eye development. The sequence is that of Nonsense-mediated mRNA decay factor SMG9 from Rattus norvegicus (Rat).